Here is a 301-residue protein sequence, read N- to C-terminus: Cell division protein kinase 2 homolog CRK1 (301 aa).

A Protein kinase domain is found at 5–297 (YERQEKIGEG…AADALNHPYF (293 aa)). Residues 11-19 (IGEGTYGVV) and Lys-34 contribute to the ATP site. Catalysis depends on Asp-127, which acts as the Proton acceptor. Thr-160 carries the phosphothreonine; by CAK modification.

The protein belongs to the protein kinase superfamily. CMGC Ser/Thr protein kinase family. CDC2/CDKX subfamily. Forms a stable but non-covalent complex with a regulatory subunit and with a cyclin.

The enzyme catalyses [DNA-directed RNA polymerase] + ATP = phospho-[DNA-directed RNA polymerase] + ADP + H(+). With respect to regulation, phosphorylation at Thr-15 or Tyr-16 inactivates the enzyme, while phosphorylation at Thr-160 activates it. Its function is as follows. May be involved in some stage-specific role in the promastigote cell cycle. In Leishmania mexicana, this protein is Cell division protein kinase 2 homolog CRK1 (CRK1).